Consider the following 142-residue polypeptide: FAD synthase (142 aa).

Residues 9 to 10 (TF), 14 to 17 (HPGH), and D92 each bind ATP.

This sequence belongs to the archaeal FAD synthase family. As to quaternary structure, homodimer. The cofactor is a divalent metal cation.

The catalysed reaction is FMN + ATP + H(+) = FAD + diphosphate. It functions in the pathway cofactor biosynthesis; FAD biosynthesis; FAD from FMN: step 1/1. In terms of biological role, catalyzes the transfer of the AMP portion of ATP to flavin mononucleotide (FMN) to produce flavin adenine dinucleotide (FAD) coenzyme. The sequence is that of FAD synthase from Haloferax volcanii (strain ATCC 29605 / DSM 3757 / JCM 8879 / NBRC 14742 / NCIMB 2012 / VKM B-1768 / DS2) (Halobacterium volcanii).